The primary structure comprises 166 residues: Phosphopantetheine adenylyltransferase (166 aa).

Residue Ser-9 participates in substrate binding. Residues 9–10 and His-17 contribute to the ATP site; that span reads SF. 3 residues coordinate substrate: Lys-41, Leu-74, and Lys-88. ATP contacts are provided by residues 89–91, Glu-99, and 123–129; these read GLR and YIHLSST.

It belongs to the bacterial CoaD family. In terms of assembly, homohexamer. Requires Mg(2+) as cofactor.

It is found in the cytoplasm. The enzyme catalyses (R)-4'-phosphopantetheine + ATP + H(+) = 3'-dephospho-CoA + diphosphate. It functions in the pathway cofactor biosynthesis; coenzyme A biosynthesis; CoA from (R)-pantothenate: step 4/5. In terms of biological role, reversibly transfers an adenylyl group from ATP to 4'-phosphopantetheine, yielding dephospho-CoA (dPCoA) and pyrophosphate. In Pseudarthrobacter chlorophenolicus (strain ATCC 700700 / DSM 12829 / CIP 107037 / JCM 12360 / KCTC 9906 / NCIMB 13794 / A6) (Arthrobacter chlorophenolicus), this protein is Phosphopantetheine adenylyltransferase.